The sequence spans 182 residues: uncharacterized protein (182 aa).

Disordered stretches follow at residues 1–73 (MMSG…YRSL) and 105–182 (SMST…HLNR). Composition is skewed to low complexity over residues 43–68 (RPSPFLSPSSSSSQTSISPTPTETSS) and 105–121 (SMSTLELSSSTLSSPVT). A compositionally biased stretch (pro residues) spans 122-131 (APAPPPPPTS).

This is an uncharacterized protein from Caenorhabditis elegans.